The primary structure comprises 183 residues: uncharacterized protein (183 aa).

The segment at 136–183 (EPPASVPSKQSGRSDKKKSTRKSPTFRNRPDFRKNKGRQLNKTTKQKK) is disordered. Over residues 170 to 183 (NKGRQLNKTTKQKK) the composition is skewed to basic residues.

This is an uncharacterized protein from Homo sapiens (Human).